The following is a 227-amino-acid chain: Endo-1,4-beta-xylanase 2 (227 aa).

Positions 1–36 (MVSIKSVLAAATAVSSALAAPFDFVPRDNSTALQAR) are cleaved as a signal peptide. Asparagine 29 carries an N-linked (GlcNAc...) asparagine glycan. The 189-residue stretch at 37–225 (QVTPNAEGWH…SSGESDIYVQ (189 aa)) folds into the GH11 domain. Glutamate 121 serves as the catalytic Nucleophile. Glutamate 212 functions as the Proton donor in the catalytic mechanism.

This sequence belongs to the glycosyl hydrolase 11 (cellulase G) family.

The protein localises to the secreted. The enzyme catalyses Endohydrolysis of (1-&gt;4)-beta-D-xylosidic linkages in xylans.. Its pathway is glycan degradation; xylan degradation. Endo-1,4-beta-xylanase involved in the hydrolysis of xylan, a major structural heterogeneous polysaccharide found in plant biomass representing the second most abundant polysaccharide in the biosphere, after cellulose. In Humicola insolens (Soft-rot fungus), this protein is Endo-1,4-beta-xylanase 2 (xyn2).